Here is a 299-residue protein sequence, read N- to C-terminus: Putative peptidyl-prolyl cis-trans isomerase jhp_0161 (299 aa).

A signal peptide spans 1–21 (MKKNILNLALVGALSASFLMA). The 100-residue stretch at 154 to 253 (KQEAHARHIL…FGYHIIYLIS (100 aa)) folds into the PpiC domain.

It carries out the reaction [protein]-peptidylproline (omega=180) = [protein]-peptidylproline (omega=0). The sequence is that of Putative peptidyl-prolyl cis-trans isomerase jhp_0161 from Helicobacter pylori (strain J99 / ATCC 700824) (Campylobacter pylori J99).